The chain runs to 252 residues: Indole-3-glycerol phosphate synthase (252 aa).

Belongs to the TrpC family.

It carries out the reaction 1-(2-carboxyphenylamino)-1-deoxy-D-ribulose 5-phosphate + H(+) = (1S,2R)-1-C-(indol-3-yl)glycerol 3-phosphate + CO2 + H2O. Its pathway is amino-acid biosynthesis; L-tryptophan biosynthesis; L-tryptophan from chorismate: step 4/5. This is Indole-3-glycerol phosphate synthase from Listeria welshimeri serovar 6b (strain ATCC 35897 / DSM 20650 / CCUG 15529 / CIP 8149 / NCTC 11857 / SLCC 5334 / V8).